The sequence spans 163 residues: ADP-ribosylation factor-like protein 2-binding protein (163 aa).

Belongs to the ARL2BP family. In terms of assembly, found in a complex with ARL2BP, ARL2 and SLC25A6. Found in a complex with ARL2, ARL2BP and SLC25A4. Interacts with STAT2, STAT3 and STAT4. Interacts with GTP-bound ARL2 and ARL3; the complex ARL2-ARL2BP as well as ARL2BP alone, binds to SLC25A4. Interaction with ARL2 may be required for targeting to cilia basal body. Interacts with STAT3; interaction is enhanced with ARL2. As to expression, expressed in retina pigment epithelial cells (at protein level). Widely expressed.

It localises to the cytoplasm. The protein resides in the mitochondrion intermembrane space. It is found in the cytoskeleton. Its subcellular location is the microtubule organizing center. The protein localises to the centrosome. It localises to the nucleus. The protein resides in the spindle. It is found in the cilium basal body. Functionally, together with ARL2, plays a role in the nuclear translocation, retention and transcriptional activity of STAT3. May play a role as an effector of ARL2. The protein is ADP-ribosylation factor-like protein 2-binding protein (ARL2BP) of Homo sapiens (Human).